The sequence spans 48 residues: Hemoglobin subunit beta-B (48 aa).

In terms of domain architecture, Globin spans 2–48; sequence EWTDAERGAILSLWGKIDPDELGPALLARXXLVYXXTQRYFASFGDL.

It belongs to the globin family. In terms of assembly, heterotetramer of two alpha chains and two beta chains. Red blood cells.

Its function is as follows. Involved in oxygen transport from gills to the various peripheral tissues. In Catostomus clarkii (Desert sucker), this protein is Hemoglobin subunit beta-B.